The chain runs to 267 residues: Putative [LysW]-aminoadipate/[LysW]-glutamate kinase (267 aa).

Substrate-binding positions include 37-38 (GG), Arg64, and Asn169.

Belongs to the acetylglutamate kinase family. LysZ subfamily.

Its subcellular location is the cytoplasm. It carries out the reaction [amino-group carrier protein]-C-terminal-N-(1,4-dicarboxybutan-1-yl)-L-glutamine + ATP = [amino-group carrier protein]-C-terminal-N-(1-carboxy-5-phosphooxy-5-oxopentan-1-yl)-L-glutamine + ADP. The enzyme catalyses [amino-group carrier protein]-C-terminal-gamma-(L-glutamyl)-L-glutamate + ATP = [amino-group carrier protein]-C-terminal-gamma-(5-phospho-L-glutamyl)-L-glutamate + ADP. The protein operates within amino-acid biosynthesis; L-lysine biosynthesis via AAA pathway; L-lysine from L-alpha-aminoadipate (Thermus route): step 2/5. It participates in amino-acid biosynthesis; L-arginine biosynthesis. Involved in both the arginine and lysine biosynthetic pathways. Phosphorylates the LysW-bound precursors glutamate (for arginine biosynthesis), respectively alpha-aminoadipate (for lysine biosynthesis). The sequence is that of Putative [LysW]-aminoadipate/[LysW]-glutamate kinase from Nitrosopumilus maritimus (strain SCM1).